Reading from the N-terminus, the 156-residue chain is Small ribosomal subunit protein uS7 (156 aa).

It belongs to the universal ribosomal protein uS7 family. As to quaternary structure, part of the 30S ribosomal subunit. Contacts proteins S9 and S11.

Functionally, one of the primary rRNA binding proteins, it binds directly to 16S rRNA where it nucleates assembly of the head domain of the 30S subunit. Is located at the subunit interface close to the decoding center, probably blocks exit of the E-site tRNA. In Shewanella piezotolerans (strain WP3 / JCM 13877), this protein is Small ribosomal subunit protein uS7.